Consider the following 127-residue polypeptide: Small ribosomal subunit protein bS16 (127 aa).

The segment at 80–127 is disordered; that stretch reads GLKKRPTRNNPHKGEPGKKAQERIAAAKQAAEEAAAAKTESAPISEEV. Over residues 81–90 the composition is skewed to basic residues; the sequence is LKKRPTRNNP. Basic and acidic residues predominate over residues 91-101; sequence HKGEPGKKAQE. Low complexity predominate over residues 102 to 121; it reads RIAAAKQAAEEAAAAKTESA.

This sequence belongs to the bacterial ribosomal protein bS16 family.

The sequence is that of Small ribosomal subunit protein bS16 from Bartonella henselae (strain ATCC 49882 / DSM 28221 / CCUG 30454 / Houston 1) (Rochalimaea henselae).